The chain runs to 430 residues: Zinc finger CCCH domain-containing protein 48 (430 aa).

Disordered regions lie at residues 1-27 (MDLD…TTDS) and 56-90 (GSGP…GTAN). The C3H1-type 1 zinc finger occupies 26–52 (DSNQKVCFHWRAGRCNRYPCPYLHREL). The C3H1-type 2 zinc finger occupies 102-129 (TKTEKLCKFWVDGNCPYGDKCRYLHCWS). WD repeat units follow at residues 142-183 (GHQK…GVLN), 221-258 (GPVG…SCFD), 265-304 (GHTL…QTLT), 306-342 (HTSV…NLEV), 345-389 (THKE…ERGK), and 391-429 (LAKQ…TPIL).

In Arabidopsis thaliana (Mouse-ear cress), this protein is Zinc finger CCCH domain-containing protein 48 (ZFWD1).